Reading from the N-terminus, the 543-residue chain is Cyclohexanone 1,2-monooxygenase (543 aa).

FAD contacts are provided by Phe16, Asp37, Trp46, Asp57, Tyr63, and Val110.

This sequence belongs to the FAD-binding monooxygenase family. FAD serves as cofactor.

It carries out the reaction cyclohexanone + NADPH + O2 + H(+) = hexano-6-lactone + NADP(+) + H2O. This Acinetobacter sp protein is Cyclohexanone 1,2-monooxygenase.